We begin with the raw amino-acid sequence, 269 residues long: 3-methyl-2-oxobutanoate hydroxymethyltransferase (269 aa).

Residues D48 and D87 each contribute to the Mg(2+) site. 3-methyl-2-oxobutanoate-binding positions include 48–49, D87, and K116; that span reads DS. Residue E118 participates in Mg(2+) binding. Residue E185 is the Proton acceptor of the active site.

The protein belongs to the PanB family. In terms of assembly, homodecamer; pentamer of dimers. Mg(2+) serves as cofactor.

It localises to the cytoplasm. It catalyses the reaction 3-methyl-2-oxobutanoate + (6R)-5,10-methylene-5,6,7,8-tetrahydrofolate + H2O = 2-dehydropantoate + (6S)-5,6,7,8-tetrahydrofolate. It participates in cofactor biosynthesis; (R)-pantothenate biosynthesis; (R)-pantoate from 3-methyl-2-oxobutanoate: step 1/2. Catalyzes the reversible reaction in which hydroxymethyl group from 5,10-methylenetetrahydrofolate is transferred onto alpha-ketoisovalerate to form ketopantoate. This is 3-methyl-2-oxobutanoate hydroxymethyltransferase from Campylobacter curvus (strain 525.92).